Here is a 195-residue protein sequence, read N- to C-terminus: Cbp/p300-interacting transactivator 1 (195 aa).

2 disordered regions span residues methionine 1–proline 24 and alanine 51–isoleucine 149. Over residues glycine 54–proline 78 the composition is skewed to low complexity. A compositionally biased stretch (polar residues) spans methionine 97–tyrosine 106. Residues serine 137–alanine 148 show a composition bias toward low complexity. The Nuclear export signal signature appears at leucine 160 to leucine 169.

The protein belongs to the CITED family. In terms of assembly, interacts (via C-terminus) with CREBBP. Interacts with EGR2. Homodimer. Binds to RBM14. Interacts (via N-terminus) with HSPA8; the interaction suppresses the association of CITED1 with p300/CBP and SMAD-mediated transcription transactivation. Interacts (via C-terminus) with TOX3 (via HGM box); the interaction increases estrogen-response element (ERE)-dependent transcription and protection against cell death. Interacts with ESR1; the interaction occurs in a estrogen-dependent manner. Interacts (unphosphorylated form preferentially and via C-terminus) with EP300. Phosphorylated. Phosphorylation changes in a cell cycle-dependent manner and reduces its transcriptional cofactor activity.

The protein resides in the nucleus. It is found in the cytoplasm. Transcriptional coactivator of the p300/CBP-mediated transcription complex. Enhances SMAD-mediated transcription by strengthening the functional link between the DNA-binding SMAD transcription factors and the p300/CBP transcription coactivator complex. Stimulates estrogen-dependent transactivation activity mediated by estrogen receptors signaling; stabilizes the interaction of estrogen receptor ESR1 and histone acetyltransferase EP300. Positively regulates TGF-beta signaling through its association with the SMAD/p300/CBP-mediated transcriptional coactivator complex. Induces transcription from estrogen-responsive promoters and protection against cell death. Potentiates EGR2-mediated transcriptional activation activity from the ERBB2 promoter. Acts as an inhibitor of osteoblastic mineralization through a cAMP-dependent parathyroid hormone receptor signaling. May play a role in pigmentation of melanocytes. Associates with chromatin to the estrogen-responsive TGF-alpha promoter region in a estrogen-dependent manner. The polypeptide is Cbp/p300-interacting transactivator 1 (CITED1) (Bos taurus (Bovine)).